Here is a 436-residue protein sequence, read N- to C-terminus: Protein arginine methyltransferase NDUFAF7, mitochondrial (436 aa).

A mitochondrion-targeting transit peptide spans 1 to 41 (MNALVRRCVARAGLPCIWRGKCYSSGNEPAESNQVTPMLRH). The interval 411-436 (GSQERNACQSKTPSSSVAGFDELVWQ) is disordered. Residues 413–427 (QERNACQSKTPSSSV) show a composition bias toward polar residues.

Belongs to the NDUFAF7 family. As to quaternary structure, interacts with NDUFS2.

It is found in the mitochondrion. The catalysed reaction is L-arginyl-[protein] + 2 S-adenosyl-L-methionine = N(omega),N(omega)'-dimethyl-L-arginyl-[protein] + 2 S-adenosyl-L-homocysteine + 2 H(+). In terms of biological role, arginine methyltransferase involved in the assembly or stability of mitochondrial NADH:ubiquinone oxidoreductase complex (complex I). Acts by mediating symmetric dimethylation of 'Arg-118' of NDUFS2 after it assembles into the complex I, stabilizing the early intermediate complex. This is Protein arginine methyltransferase NDUFAF7, mitochondrial from Mus musculus (Mouse).